Here is an 86-residue protein sequence, read N- to C-terminus: Putative membrane protein insertion efficiency factor (86 aa).

Belongs to the UPF0161 family.

It is found in the cell inner membrane. Functionally, could be involved in insertion of integral membrane proteins into the membrane. The polypeptide is Putative membrane protein insertion efficiency factor (Ruegeria sp. (strain TM1040) (Silicibacter sp.)).